A 451-amino-acid polypeptide reads, in one-letter code: Probable NADH dehydrogenase (451 aa).

41–71 (KLIILGCGWGSYSFLKNLNSIKYDITVISPR) contacts FAD. An NAD(+)-binding site is contributed by 199 to 236 (LSFVIVGGGATGIEFTSELNDFFSEDLSRLFPFVPVNE).

The protein belongs to the NADH dehydrogenase family. FAD is required as a cofactor.

The enzyme catalyses a ubiquinone + NADH + 5 H(+)(in) = a ubiquinol + NAD(+) + 4 H(+)(out). The chain is Probable NADH dehydrogenase from Dictyostelium discoideum (Social amoeba).